Here is a 352-residue protein sequence, read N- to C-terminus: Minor capsid protein VP2 (352 aa).

The N-myristoyl glycine; by host moiety is linked to residue Gly-2. Positions 273–308 (SGEFIEKFEAPGGANQRTAPQWMLPLLLGLYGSVTS) are D1. Residues 290–310 (TAPQWMLPLLLGLYGSVTSAL) form a helical membrane-spanning segment. The interval 313–352 (YEDGPNKKKRKLSRGSSQKTKGTSASAKARHKRRNRSSRS) is disordered. Residues 313–352 (YEDGPNKKKRKLSRGSSQKTKGTSASAKARHKRRNRSSRS) are DNA-binding. The Nuclear localization signal motif lies at 316–324 (GPNKKKRKL). Positions 326–338 (RGSSQKTKGTSAS) are enriched in polar residues. The span at 340-352 (KARHKRRNRSSRS) shows a compositional bias: basic residues.

The protein belongs to the polyomaviruses capsid protein VP2 family. Forms homooligomers, and heterooligomers with VP3 in the endoplasmic reticulum membrane. Interacts (via D1 domain) with VP1. As to quaternary structure, interacts (via D1 domain) with VP1. Interacts (via C-terminus) with host SP1, this is probably also the case for VP2; this interaction represses SP1 activation of the SV40 early promoter and participates in virion assembly. Interacts (via nuclear localization signal) with host importin alpha2-beta heterodimer. In terms of assembly, oligomerizes with VP3 in the nucleus.

The protein resides in the virion. The protein localises to the host nucleus. It is found in the host endoplasmic reticulum. It localises to the host endoplasmic reticulum membrane. Structural protein that resides within the core of the capsid surrounded by 72 VP1 pentamers. Following virus endocytosis and trafficking to the endoplasmic reticulum, VP2 and VP3 form oligomers and integrate into the endoplasmic reticulum membrane. Heterooligomer VP2-VP3 may create a viroporin for transporting the viral genome across the endoplasmic reticulum membrane to the cytoplasm. Nuclear entry of the viral DNA involves the selective exposure and importin recognition of VP2 or VP3 nuclear localization signal (shared C-terminus). Plays a role in virion assembly within the nucleus in particular through a DNA-binding domain located in the C-terminal region. An N-terminal myristoylation suggests a scaffold function for virion assembly. The viral progenies exit the cells by lytic release. Isoform VP2 may repress SP1 activation of the SV40 early promoter, via specific protein-protein and protein-DNA interactions. In terms of biological role, structural protein that resides within the core of the capsid surrounded by 72 VP1 pentamers. Following virus entry, VP2 and VP3 form oligomers and integrate into the endoplasmic reticulum membrane. Heterooligomer VP2-VP3 may create a viroporin for transporting the viral genome across the endoplasmic reticulum membrane. Essential for focus formation and virus endoplasmic reticulum-to-cytosol membrane transport, required to recruit selective cellular components to the foci in the ER membrane. Nuclear entry of the viral DNA involves the selective exposure and importin recognition of VP2 or VP3 nuclear localization signal (shared C-terminus). Isoform VP3 represses SP1 activation of the SV40 early promoter, via specific protein-protein and protein-DNA interactions. SP1 additionally participates in recruiting VP3 to the SV40 minichromosome during SV40 assembly. Plays a role in virion assembly within the nucleus. May initiate host cell lysis when associated with VP4. Functionally, viroporin inducing perforation of cellular membranes to trigger virus progeny release. Forms pores of 3 nm inner diameter. VP4 is expressed about 24 hours after the late structural proteins and is not incorporated into the mature virion. The polypeptide is Minor capsid protein VP2 (Simian virus 40 (SV40)).